The primary structure comprises 120 residues: Large ribosomal subunit protein uL18 (120 aa).

It belongs to the universal ribosomal protein uL18 family. Part of the 50S ribosomal subunit; part of the 5S rRNA/L5/L18/L25 subcomplex. Contacts the 5S and 23S rRNAs.

Its function is as follows. This is one of the proteins that bind and probably mediate the attachment of the 5S RNA into the large ribosomal subunit, where it forms part of the central protuberance. In Bacillus cereus (strain ATCC 10987 / NRS 248), this protein is Large ribosomal subunit protein uL18.